The sequence spans 101 residues: Large ribosomal subunit protein eL43 (101 aa).

The Zn(2+) site is built by Cys40, Cys43, Cys59, and Cys62. The C4-type zinc-finger motif lies at 40-62 (CPSCRSLVRLERIAFGIWRCPKC).

This sequence belongs to the eukaryotic ribosomal protein eL43 family. Putative zinc-binding subfamily. Part of the 50S ribosomal subunit. Requires Zn(2+) as cofactor.

Functionally, binds to the 23S rRNA. The chain is Large ribosomal subunit protein eL43 from Pyrobaculum aerophilum (strain ATCC 51768 / DSM 7523 / JCM 9630 / CIP 104966 / NBRC 100827 / IM2).